A 956-amino-acid chain; its full sequence is Kinesin heavy chain isoform 5C (956 aa).

The Kinesin motor domain maps to serine 8–isoleucine 327. The ATP site is built by glutamine 87, serine 89, serine 90, glycine 91, lysine 92, threonine 93, histidine 94, and lysine 99. Residues valine 174–lysine 315 are microtubule-binding. Phosphothreonine is present on threonine 403. A coiled-coil region spans residues valine 406 to lysine 923. A globular region spans residues cysteine 859–lysine 956. The tract at residues lysine 910–lysine 956 is disordered.

Belongs to the TRAFAC class myosin-kinesin ATPase superfamily. Kinesin family. Kinesin subfamily. In terms of assembly, oligomer composed of two heavy chains and two light chains. Interacts with GRIP1. Interacts with KLC3 and TRAK1. Interacts with ZFYVE27.

The protein resides in the cytoplasm. It is found in the cytoskeleton. The protein localises to the cell projection. Its subcellular location is the dendrite. The catalysed reaction is ATP + H2O = ADP + phosphate + H(+). Its function is as follows. Microtubule-associated force-producing protein that may play a role in organelle transport. Has ATPase activity. Involved in synaptic transmission. Mediates dendritic trafficking of mRNAs. Required for anterograde axonal transportation of MAPK8IP3/JIP3 which is essential for MAPK8IP3/JIP3 function in axon elongation. The sequence is that of Kinesin heavy chain isoform 5C (Kif5c) from Mus musculus (Mouse).